We begin with the raw amino-acid sequence, 512 residues long: Phosphoenolpyruvate carboxylase (512 aa).

The protein belongs to the PEPCase type 2 family. Homotetramer. It depends on Mg(2+) as a cofactor.

The enzyme catalyses oxaloacetate + phosphate = phosphoenolpyruvate + hydrogencarbonate. Catalyzes the irreversible beta-carboxylation of phosphoenolpyruvate (PEP) to form oxaloacetate (OAA), a four-carbon dicarboxylic acid source for the tricarboxylic acid cycle. The polypeptide is Phosphoenolpyruvate carboxylase (Caldivirga maquilingensis (strain ATCC 700844 / DSM 13496 / JCM 10307 / IC-167)).